The following is a 59-amino-acid chain: UPF0181 protein YoaH (59 aa).

It belongs to the UPF0181 family.

The chain is UPF0181 protein YoaH from Shigella flexneri.